A 207-amino-acid polypeptide reads, in one-letter code: MAQGTLYIVSAPSGAGKSSLIQALLKTQPLYDTQVSVSHTTRAPRPGEVHGEHYFFVNHDEFKTMIGREAFLEHAEVFGNYYGTSRETIEQVLATGVDVFLDIDWQGAQQIREKMPQARSIFILPPSKIELDRRLRGRGQDSEEVIAKRMAQAVAEMSHYAEYDYLIVNDDFDTALSDLKTIIRAERLRMSRQKQRHDALISKLLAD.

The region spanning Gly-4–Arg-184 is the Guanylate kinase-like domain. Ala-11 to Ser-18 is an ATP binding site.

This sequence belongs to the guanylate kinase family.

Its subcellular location is the cytoplasm. It carries out the reaction GMP + ATP = GDP + ADP. Essential for recycling GMP and indirectly, cGMP. This chain is Guanylate kinase, found in Salmonella paratyphi A (strain ATCC 9150 / SARB42).